Consider the following 142-residue polypeptide: Aspartate 1-decarboxylase (142 aa).

Catalysis depends on S25, which acts as the Schiff-base intermediate with substrate; via pyruvic acid. S25 carries the post-translational modification Pyruvic acid (Ser). A substrate-binding site is contributed by T57. Catalysis depends on Y58, which acts as the Proton donor. 73–75 (GAA) provides a ligand contact to substrate.

It belongs to the PanD family. As to quaternary structure, heterooctamer of four alpha and four beta subunits. Requires pyruvate as cofactor. In terms of processing, is synthesized initially as an inactive proenzyme, which is activated by self-cleavage at a specific serine bond to produce a beta-subunit with a hydroxyl group at its C-terminus and an alpha-subunit with a pyruvoyl group at its N-terminus.

Its subcellular location is the cytoplasm. The enzyme catalyses L-aspartate + H(+) = beta-alanine + CO2. It functions in the pathway cofactor biosynthesis; (R)-pantothenate biosynthesis; beta-alanine from L-aspartate: step 1/1. In terms of biological role, catalyzes the pyruvoyl-dependent decarboxylation of aspartate to produce beta-alanine. The polypeptide is Aspartate 1-decarboxylase (Arthrobacter sp. (strain FB24)).